Reading from the N-terminus, the 353-residue chain is UPF0658 Golgi apparatus membrane protein C23H3.04 (353 aa).

The next 8 helical transmembrane spans lie at 39 to 59 (IFFL…EGYC), 76 to 96 (SLPI…YLCV), 103 to 123 (NIIE…YSIV), 172 to 192 (PFLI…GFLA), 226 to 246 (LLKI…MVLP), 249 to 269 (AVVE…ILTL), 281 to 301 (LMMT…FKII), and 318 to 338 (MITT…AIGF).

It belongs to the UPF0658 family.

The protein localises to the golgi apparatus membrane. The chain is UPF0658 Golgi apparatus membrane protein C23H3.04 from Schizosaccharomyces pombe (strain 972 / ATCC 24843) (Fission yeast).